A 323-amino-acid chain; its full sequence is Aldo-keto reductase family 1 member C1 (323 aa).

NADP(+) contacts are provided by residues 20–24 (GFGTY) and aspartate 50. Tyrosine 24 contacts substrate. The active-site Proton donor is tyrosine 55. Histidine 117 contributes to the substrate binding site. NADP(+) contacts are provided by residues 166–167 (SN), glutamine 190, and 216–222 (YSALGSH). Residues histidine 222 and tryptophan 227 each contribute to the substrate site. 270 to 280 (KSYNEQRIREN) lines the NADP(+) pocket.

Belongs to the aldo/keto reductase family. Monomer. Expressed in liver, adrenal gland, intestine and kidney.

The protein localises to the cytoplasm. It is found in the cytosol. The enzyme catalyses a 3alpha-hydroxysteroid + NADP(+) = a 3-oxosteroid + NADPH + H(+). It catalyses the reaction a 3alpha-hydroxysteroid + NAD(+) = a 3-oxosteroid + NADH + H(+). The catalysed reaction is (17R,20S)-17,20-dihydroxypregn-4-en-3-one + NADP(+) = 17alpha-hydroxyprogesterone + NADPH + H(+). It carries out the reaction (17R,20S)-17,20-dihydroxypregn-4-en-3-one + NAD(+) = 17alpha-hydroxyprogesterone + NADH + H(+). The enzyme catalyses (20S)-hydroxypregn-4-en-3-one + NADP(+) = progesterone + NADPH + H(+). It catalyses the reaction (20S)-hydroxypregn-4-en-3-one + NAD(+) = progesterone + NADH + H(+). The catalysed reaction is (1R,2R)-1,2-dihydrobenzene-1,2-diol + NADP(+) = catechol + NADPH + H(+). It carries out the reaction (S)-indan-1-ol + NAD(+) = indan-1-one + NADH + H(+). The enzyme catalyses (S)-indan-1-ol + NADP(+) = indan-1-one + NADPH + H(+). It catalyses the reaction 5alpha-androstane-3alpha,17beta-diol + NADP(+) = 17beta-hydroxy-5alpha-androstan-3-one + NADPH + H(+). The catalysed reaction is 5alpha-androstane-3beta,17beta-diol + NADP(+) = 17beta-hydroxy-5alpha-androstan-3-one + NADPH + H(+). It carries out the reaction 5alpha-androstane-3alpha,17beta-diol + NAD(+) = 17beta-hydroxy-5alpha-androstan-3-one + NADH + H(+). The enzyme catalyses 17beta-hydroxy-5alpha-androstan-3-one + NADP(+) = 5alpha-androstan-3,17-dione + NADPH + H(+). It catalyses the reaction androsterone + NADP(+) = 5alpha-androstan-3,17-dione + NADPH + H(+). The catalysed reaction is androsterone + NADPH + H(+) = 5alpha-androstane-3alpha,17beta-diol + NADP(+). It carries out the reaction 5alpha-androstane-3alpha,17beta-diol + NAD(+) = androsterone + NADH + H(+). The enzyme catalyses 17beta-estradiol + NADP(+) = estrone + NADPH + H(+). It catalyses the reaction 17beta-estradiol + NAD(+) = estrone + NADH + H(+). The catalysed reaction is testosterone + NADP(+) = androst-4-ene-3,17-dione + NADPH + H(+). It carries out the reaction 20alpha-hydroxy-5beta-pregnan-3-one + NADP(+) = 5beta-pregnan-3,20-dione + NADPH + H(+). The enzyme catalyses 3beta-hydroxy-5beta-pregnane-20-one + NADP(+) = 5beta-pregnan-3,20-dione + NADPH + H(+). It catalyses the reaction 3beta-hydroxy-5beta-pregnane-20-one + NADPH + H(+) = 3beta,20alpha-dihydroxy-5beta-pregnane + NADP(+). The catalysed reaction is (3beta,5alpha,17beta)-3-hydroxyandrostan-17-yl sulfate + NADP(+) = 5alpha-dihydrotestosterone sulfate + NADPH + H(+). It functions in the pathway steroid metabolism. Its function is as follows. Cytosolic aldo-keto reductase that catalyzes the NADH and NADPH-dependent reduction of ketosteroids to hydroxysteroids. Most probably acts as a reductase in vivo since the oxidase activity measured in vitro is inhibited by physiological concentrations of NADPH. Displays a broad positional specificity acting on positions 3, 17 and 20 of steroids and regulates the metabolism of hormones like estrogens and androgens. May also reduce conjugated steroids such as 5alpha-dihydrotestosterone sulfate. Displays affinity for bile acids. The sequence is that of Aldo-keto reductase family 1 member C1 (AKR1C1) from Macaca fuscata fuscata (Japanese macaque).